A 241-amino-acid chain; its full sequence is Tubulin-like protein alpha-4B (241 aa).

Positions 1 to 10 (MRHQQTERQD) are enriched in basic and acidic residues. Residues 1–20 (MRHQQTERQDPSQPLSRQHG) are disordered. D10 contributes to the GTP binding site. Residue D10 participates in Mg(2+) binding. The segment covering 11 to 20 (PSQPLSRQHG) has biased composition (polar residues). The GTP site is built by S79, G83, T84, T118, N145, and N167. E193 is a catalytic residue.

Belongs to the tubulin family. Mg(2+) is required as a cofactor. Post-translationally, some glutamate residues at the C-terminus are polyglutamylated, resulting in polyglutamate chains on the gamma-carboxyl group. Polyglutamylation plays a key role in microtubule severing by spastin (SPAST). SPAST preferentially recognizes and acts on microtubules decorated with short polyglutamate tails: severing activity by SPAST increases as the number of glutamates per tubulin rises from one to eight, but decreases beyond this glutamylation threshold. Glutamylation is also involved in cilia motility. In terms of processing, some glutamate residues at the C-terminus are monoglycylated but not polyglycylated due to the absence of functional TTLL10 in human. Monoglycylation is mainly limited to tubulin incorporated into cilia and flagella axonemes, which is required for their stability and maintenance. Flagella glycylation controls sperm motility. Both polyglutamylation and monoglycylation can coexist on the same protein on adjacent residues, and lowering glycylation levels increases polyglutamylation, and reciprocally.

It is found in the cytoplasm. The protein localises to the cytoskeleton. It catalyses the reaction GTP + H2O = GDP + phosphate + H(+). Functionally, tubulin is the major constituent of microtubules, a cylinder consisting of laterally associated linear protofilaments composed ofalpha- and beta-tubulin heterodimers. In Homo sapiens (Human), this protein is Tubulin-like protein alpha-4B (TUBA4B).